A 474-amino-acid polypeptide reads, in one-letter code: Aspartyl/glutamyl-tRNA(Asn/Gln) amidotransferase subunit B (474 aa).

The protein belongs to the GatB/GatE family. GatB subfamily. Heterotrimer of A, B and C subunits.

The enzyme catalyses L-glutamyl-tRNA(Gln) + L-glutamine + ATP + H2O = L-glutaminyl-tRNA(Gln) + L-glutamate + ADP + phosphate + H(+). The catalysed reaction is L-aspartyl-tRNA(Asn) + L-glutamine + ATP + H2O = L-asparaginyl-tRNA(Asn) + L-glutamate + ADP + phosphate + 2 H(+). Allows the formation of correctly charged Asn-tRNA(Asn) or Gln-tRNA(Gln) through the transamidation of misacylated Asp-tRNA(Asn) or Glu-tRNA(Gln) in organisms which lack either or both of asparaginyl-tRNA or glutaminyl-tRNA synthetases. The reaction takes place in the presence of glutamine and ATP through an activated phospho-Asp-tRNA(Asn) or phospho-Glu-tRNA(Gln). In Campylobacter curvus (strain 525.92), this protein is Aspartyl/glutamyl-tRNA(Asn/Gln) amidotransferase subunit B.